The following is a 410-amino-acid chain: Transposase for insertion sequence element IS801 (410 aa).

It belongs to the transposase 32 family.

Its function is as follows. Involved in the transposition of the insertion sequence. In Pseudomonas savastanoi pv. phaseolicola (Pseudomonas syringae pv. phaseolicola), this protein is Transposase for insertion sequence element IS801.